We begin with the raw amino-acid sequence, 114 residues long: uncharacterized protein (114 aa).

One can recognise an HIT domain in the interval 6–114; sequence IFSKIIRREI…GGRPFSWPPG (109 aa). The Histidine triad motif motif lies at 98-102; it reads HLHLH.

This is an uncharacterized protein from Synechocystis sp. (strain ATCC 27184 / PCC 6803 / Kazusa).